The chain runs to 195 residues: Pyruvoyl-dependent arginine decarboxylase AaxB (195 aa).

Ser-53 carries the pyruvic acid (Ser) modification.

Belongs to the pyruvoyl-dependent arginine decarboxylase family. As to quaternary structure, trimer of an alpha-beta dimer. The cofactor is pyruvate.

Its subcellular location is the cytoplasm. The enzyme catalyses L-arginine + H(+) = agmatine + CO2. Functionally, part of the AaxABC system, catalyzes the decarboxylation of L-arginine. The arginine uptake by the bacterium in the macrophage may be a virulence factor against the host innate immune response. The protein is Pyruvoyl-dependent arginine decarboxylase AaxB (aaxB) of Chlamydia caviae (strain ATCC VR-813 / DSM 19441 / 03DC25 / GPIC) (Chlamydophila caviae).